We begin with the raw amino-acid sequence, 405 residues long: D-threonate kinase (405 aa).

Substrate is bound by residues aspartate 12, arginine 59, and 88-91; that span reads KVDS. ATP contacts are provided by residues serine 243, 337 to 340, and glycine 383; that span reads GGDG.

The protein belongs to the four-carbon acid sugar kinase family.

The catalysed reaction is D-threonate + ATP = 4-O-phospho-D-threonate + ADP + H(+). In terms of biological role, catalyzes the ATP-dependent phosphorylation of D-threonate to D-threonate 4-phosphate. Can also phosphorylate 4-hydroxy-L-threonine, with lower efficiency. The polypeptide is D-threonate kinase (Bordetella bronchiseptica (strain ATCC BAA-588 / NCTC 13252 / RB50) (Alcaligenes bronchisepticus)).